The sequence spans 211 residues: Urease accessory protein UreG (211 aa).

11–18 (GPVGSGKT) contributes to the GTP binding site.

It belongs to the SIMIBI class G3E GTPase family. UreG subfamily. In terms of assembly, homodimer. UreD, UreF and UreG form a complex that acts as a GTP-hydrolysis-dependent molecular chaperone, activating the urease apoprotein by helping to assemble the nickel containing metallocenter of UreC. The UreE protein probably delivers the nickel.

Its subcellular location is the cytoplasm. In terms of biological role, facilitates the functional incorporation of the urease nickel metallocenter. This process requires GTP hydrolysis, probably effectuated by UreG. The sequence is that of Urease accessory protein UreG from Photorhabdus laumondii subsp. laumondii (strain DSM 15139 / CIP 105565 / TT01) (Photorhabdus luminescens subsp. laumondii).